Consider the following 404-residue polypeptide: Putative glutamate--cysteine ligase 2 (404 aa).

Positions 377–404 (GPAGKRAHEGGRSFRPAAGAPMSIRGQE) are disordered.

Belongs to the glutamate--cysteine ligase type 2 family. YbdK subfamily.

It carries out the reaction L-cysteine + L-glutamate + ATP = gamma-L-glutamyl-L-cysteine + ADP + phosphate + H(+). Its function is as follows. ATP-dependent carboxylate-amine ligase which exhibits weak glutamate--cysteine ligase activity. The sequence is that of Putative glutamate--cysteine ligase 2 from Pseudomonas aeruginosa (strain UCBPP-PA14).